A 252-amino-acid chain; its full sequence is Short-chain dehydrogenase anuI (252 aa).

Positions 18, 65, 92, 171, 175, and 206 each coordinate NADP(+). Tyr-171 (proton acceptor) is an active-site residue. Tyr-171 functions as the Proton donor in the catalytic mechanism. The Lowers pKa of active site Tyr role is filled by Lys-175.

The protein belongs to the short-chain dehydrogenases/reductases (SDR) family.

Functionally, highly reducing polyketide synthase; part of the gene cluster that mediates the biosynthesis of annullatin D, an alkylated aromatic polyketide with a fused dihydrobenzofuran lactone ring system that exhibits potent agonistic activities toward the cannabinoid receptors. AnuI does not seem to play a role within the pathway. The annullatin backbone 2-hydroxymethyl-3-pentylphenol is assembled from one acetyl-CoA starter unit and 5 malonyl-CoA elongation units by cooperation of the highly reducing polyketide synthase anuA, the short-chain dehydrogenase anuB and the oxidoreductase anuC, before being hydroxylated at the C-5 alkyl chain by the cytochrome P450 monooxygenase anuE to form (8S)-annullatin E. The prenyltransferase anuH subsequently installs one isoprenyl group at the benzene ring to form (8S)-annullatin J. Enzymatic or nonenzymatic dihydro-benzofuran ring formation between the prenyl and the phenolic hydroxyl groups in (8S)-annullatin J results in two diastereomers (2S,9S)-annullatin H and compound 12. The intermediate (2S,9S)-annullatin H is then converted to (2S,9S)-annullatin D by the FAD-linked oxidoreductase anuG-catalyzed five-member lactone ring formation. The isomer 12 acts as a substrate for the short-chain dehydrogenase anuF and is oxidized to (2R)-annullatin F, which is subsequently acetylated by an acetyltransferase leading to (2R)-annullatin G formation. The remaining enzymes identified within the cluster, anuD, anuI and anuJ, seem not to be involved in annullatin biosynthesis. The sequence is that of Short-chain dehydrogenase anuI from Penicillium roqueforti (strain FM164).